The sequence spans 222 residues: Peptide methionine sulfoxide reductase MsrA (222 aa).

Residue Cys-54 is part of the active site.

Belongs to the MsrA Met sulfoxide reductase family.

The enzyme catalyses L-methionyl-[protein] + [thioredoxin]-disulfide + H2O = L-methionyl-(S)-S-oxide-[protein] + [thioredoxin]-dithiol. It catalyses the reaction [thioredoxin]-disulfide + L-methionine + H2O = L-methionine (S)-S-oxide + [thioredoxin]-dithiol. Functionally, has an important function as a repair enzyme for proteins that have been inactivated by oxidation. Catalyzes the reversible oxidation-reduction of methionine sulfoxide in proteins to methionine. In Methylococcus capsulatus (strain ATCC 33009 / NCIMB 11132 / Bath), this protein is Peptide methionine sulfoxide reductase MsrA.